The chain runs to 629 residues: Probable potassium transport system protein Kup 3 (629 aa).

A run of 12 helical transmembrane segments spans residues 20-40 (LSLSALGIVYGDIGTSPLYTF), 54-74 (VTTIMGSASLIIWTLIIIASV), 106-126 (PFIIAVGLMGAALIYGDGTIT), 143-163 (PSLKYYVLPIAITILITLFAI), 171-191 (IGKAFGPVMAFWFLTIGILGA), 212-232 (FLFSNGATGFFILCGVFLCVT), 253-273 (WFGLAFPSLIFNYLGQAALVL), 291-311 (FLLPLIILSTVATIIASQAII), 343-363 (IYIGVVNWLLMLATLGLIIGF), 372-392 (AYGIAVSATMLCTSVLLFIAL), 400-420 (IIKSGLVAGLFMIVDASFFAA), and 425-445 (FINGGYIPITLAIIIYSMMYI).

This sequence belongs to the HAK/KUP transporter (TC 2.A.72) family.

It localises to the cell inner membrane. It catalyses the reaction K(+)(in) + H(+)(in) = K(+)(out) + H(+)(out). In terms of biological role, transport of potassium into the cell. Likely operates as a K(+):H(+) symporter. In Legionella pneumophila (strain Corby), this protein is Probable potassium transport system protein Kup 3.